Consider the following 117-residue polypeptide: MNTKTLIVVFLVCLLVSEVVLARRCGGRGRRIKIKKIVRKLRPIVRVMKVITRMRTSRPRPRLRPCNSSDLQTTSYQVMQPISPKLKSCPVSLAICNRKCSRRGMKGRCQRRECVCY.

A signal peptide spans 1 to 22 (MNTKTLIVVFLVCLLVSEVVLA).

Contains 4 disulfide bonds. As to expression, expressed by the venom gland.

It is found in the secreted. In Lychas mucronatus (Chinese swimming scorpion), this protein is Venom protein TxLP11.